The sequence spans 85 residues: Large ribosomal subunit protein bL27 (85 aa).

The segment at 1–22 (MAHKKGASSTRNGRDSNAQRLG) is disordered. Over residues 7 to 19 (ASSTRNGRDSNAQ) the composition is skewed to polar residues.

Belongs to the bacterial ribosomal protein bL27 family.

The protein is Large ribosomal subunit protein bL27 of Leifsonia xyli subsp. xyli (strain CTCB07).